The chain runs to 316 residues: 4-hydroxy-3-methylbut-2-enyl diphosphate reductase (316 aa).

Cysteine 17 lines the [4Fe-4S] cluster pocket. Residues histidine 46 and histidine 79 each coordinate (2E)-4-hydroxy-3-methylbut-2-enyl diphosphate. Residues histidine 46 and histidine 79 each contribute to the dimethylallyl diphosphate site. Isopentenyl diphosphate is bound by residues histidine 46 and histidine 79. Residue cysteine 101 participates in [4Fe-4S] cluster binding. A (2E)-4-hydroxy-3-methylbut-2-enyl diphosphate-binding site is contributed by histidine 129. Residue histidine 129 participates in dimethylallyl diphosphate binding. Isopentenyl diphosphate is bound at residue histidine 129. The Proton donor role is filled by glutamate 131. Threonine 170 serves as a coordination point for (2E)-4-hydroxy-3-methylbut-2-enyl diphosphate. Cysteine 200 is a binding site for [4Fe-4S] cluster. Residues serine 228, serine 229, asparagine 230, and serine 273 each contribute to the (2E)-4-hydroxy-3-methylbut-2-enyl diphosphate site. The dimethylallyl diphosphate site is built by serine 228, serine 229, asparagine 230, and serine 273. Residues serine 228, serine 229, asparagine 230, and serine 273 each contribute to the isopentenyl diphosphate site.

Belongs to the IspH family. Requires [4Fe-4S] cluster as cofactor.

The catalysed reaction is isopentenyl diphosphate + 2 oxidized [2Fe-2S]-[ferredoxin] + H2O = (2E)-4-hydroxy-3-methylbut-2-enyl diphosphate + 2 reduced [2Fe-2S]-[ferredoxin] + 2 H(+). It catalyses the reaction dimethylallyl diphosphate + 2 oxidized [2Fe-2S]-[ferredoxin] + H2O = (2E)-4-hydroxy-3-methylbut-2-enyl diphosphate + 2 reduced [2Fe-2S]-[ferredoxin] + 2 H(+). Its pathway is isoprenoid biosynthesis; dimethylallyl diphosphate biosynthesis; dimethylallyl diphosphate from (2E)-4-hydroxy-3-methylbutenyl diphosphate: step 1/1. It functions in the pathway isoprenoid biosynthesis; isopentenyl diphosphate biosynthesis via DXP pathway; isopentenyl diphosphate from 1-deoxy-D-xylulose 5-phosphate: step 6/6. Catalyzes the conversion of 1-hydroxy-2-methyl-2-(E)-butenyl 4-diphosphate (HMBPP) into a mixture of isopentenyl diphosphate (IPP) and dimethylallyl diphosphate (DMAPP). Acts in the terminal step of the DOXP/MEP pathway for isoprenoid precursor biosynthesis. The chain is 4-hydroxy-3-methylbut-2-enyl diphosphate reductase from Ruegeria pomeroyi (strain ATCC 700808 / DSM 15171 / DSS-3) (Silicibacter pomeroyi).